We begin with the raw amino-acid sequence, 656 residues long: Protein EMBRYO SAC DEVELOPMENT ARREST 30 (656 aa).

The helical; Signal-anchor for type II membrane protein transmembrane segment at 9-29 (WIALFVLILSMGSLVVHLSMT) threads the bilayer. Asn119 carries N-linked (GlcNAc...) asparagine glycosylation. A disordered region spans residues 381 to 426 (LSELVGPETPLPENTYKMPPRKSDKQLKEEWNKAGPRPRPLPPPPD). The segment covering 401–412 (RKSDKQLKEEWN) has biased composition (basic and acidic residues). The segment covering 417-426 (RPRPLPPPPD) has biased composition (pro residues). Residues Asn444, Asn522, Asn534, and Asn544 are each glycosylated (N-linked (GlcNAc...) asparagine). Residues 631–656 (SETEEEFAKSKVASAFDQDEEWDPND) are disordered. The span at 647–656 (DQDEEWDPND) shows a compositional bias: acidic residues.

It belongs to the glycosyltransferase GT106 family.

Its subcellular location is the membrane. It participates in glycan metabolism. The chain is Protein EMBRYO SAC DEVELOPMENT ARREST 30 from Arabidopsis thaliana (Mouse-ear cress).